Reading from the N-terminus, the 395-residue chain is Phosphoprotein (395 aa).

Disordered regions lie at residues valine 31 to leucine 109 and asparagine 126 to valine 214. The segment covering threonine 65–lysine 74 has biased composition (basic and acidic residues). Composition is skewed to polar residues over residues glutamine 75–threonine 98, leucine 146–alanine 168, and serine 203–alanine 212. Residues aspartate 222–glycine 285 form a multimerization region.

Belongs to the rubulavirus/avulavirus P protein family. As to quaternary structure, homotetramer. Interacts (via multimerization domain) with polymerase L; this interaction forms the polymerase L-P complex. Interacts (via N-terminus) with N0 (via Ncore); this interaction allows P to chaperon N0 to avoid N polymerization before encapsidation. Interacts (via C-terminus) with N-RNA template; this interaction positions the polymerase on the template for both transcription and replication.

In terms of biological role, essential cofactor of the RNA polymerase L that plays a central role in the transcription and replication by forming the polymerase complex with RNA polymerase L and recruiting L to the genomic N-RNA template for RNA synthesis. Also plays a central role in the encapsidation of nascent RNA chains by forming the encapsidation complex with the nucleocapsid protein N (N-P complex). Acts as a chaperone for newly synthesized free N protein, so-called N0, allowing encapsidation of nascent RNA chains during replication. The nucleoprotein protein N prevents excessive phosphorylation of P, which leads to down-regulation of viral transcription/ replication. Participates, together with N, in the formation of viral factories (viroplasms), which are large inclusions in the host cytoplasm where replication takes place. This is Phosphoprotein (P/C) from Gallus gallus (Chicken).